A 124-amino-acid chain; its full sequence is Fluoride-specific ion channel FluC 1 (124 aa).

Helical transmembrane passes span 1-21 (MCAV…ALGA), 30-50 (LWPG…LLGY), 64-84 (FLGV…VDAV), and 93-113 (LYVV…MLAG). Na(+) is bound by residues Gly71 and Thr74.

Belongs to the fluoride channel Fluc/FEX (TC 1.A.43) family.

Its subcellular location is the cell membrane. It catalyses the reaction fluoride(in) = fluoride(out). Na(+) is not transported, but it plays an essential structural role and its presence is essential for fluoride channel function. Functionally, fluoride-specific ion channel. Important for reducing fluoride concentration in the cell, thus reducing its toxicity. The chain is Fluoride-specific ion channel FluC 1 from Rhodococcus jostii (strain RHA1).